The primary structure comprises 89 residues: MPKRILVGTVVSDKTDKTVVVKVERKVKHPLYGKIIRRSKKYHAHDEANAFKTGETVRIEETAPISKLKTWKVIDRVQAGKGTAIEADV.

The protein belongs to the universal ribosomal protein uS17 family. Part of the 30S ribosomal subunit.

In terms of biological role, one of the primary rRNA binding proteins, it binds specifically to the 5'-end of 16S ribosomal RNA. The protein is Small ribosomal subunit protein uS17 of Novosphingobium aromaticivorans (strain ATCC 700278 / DSM 12444 / CCUG 56034 / CIP 105152 / NBRC 16084 / F199).